Reading from the N-terminus, the 306-residue chain is Enoyl-CoA isomerase/hydratase MYCGRDRAFT_76805 (306 aa).

Substrate-binding positions include 103 to 107 (AGADL) and glycine 150.

It belongs to the enoyl-CoA hydratase/isomerase family.

It carries out the reaction a (3S)-3-hydroxyacyl-CoA = a (2E)-enoyl-CoA + H2O. The catalysed reaction is a 4-saturated-(3S)-3-hydroxyacyl-CoA = a (3E)-enoyl-CoA + H2O. It participates in siderophore biosynthesis. In terms of biological role, enoyl-CoA isomerase/hydratase involved in the biosynthesis of a ferrichrome A-like siderophore which may contribute to organismal virulence. The first step of siderophore biosynthesis is performed by the HMG-CoA synthase (HMGS) MYCGRDRAFT_54740 which catalyzes the generation of HMG-CoA and CoA using acetoacetyl-CoA and acetyl-CoA as substrates. The enoyl-CoA isomerase/hydratase MYCGRDRAFT_76805 then catalyzes the conversion of HMG-CoA to methylglutaconyl-CoA. The acyltransferase MYCGRDRAFT_85486 then fuses methylglutaconyl-CoA with hydroxyornithine to yield methylglutaconyl hydroxyornithine. Methylglutaconyl hydroxyornithine is then available for use by the nonribosomal peptide synthetase NRPS2 to generate the ferrichrome A-like siderophore. The chain is Enoyl-CoA isomerase/hydratase MYCGRDRAFT_76805 from Zymoseptoria tritici (strain CBS 115943 / IPO323) (Speckled leaf blotch fungus).